The following is a 277-amino-acid chain: ATP-dependent Clp protease proteolytic subunit, mitochondrial (277 aa).

The transit peptide at 1-56 directs the protein to the mitochondrion; it reads MWPGILVGGARVASCRYPALGPRLAAHFPAQRPPQRTLQNGLALQRCLHATATRAL. S153 functions as the Nucleophile in the catalytic mechanism. H178 is a catalytic residue. K200 bears the N6-succinyllysine mark. K211 is modified (N6-acetyllysine). The interval 246 to 277 is disordered; sequence VHPPQDGEDEPTLVQKEPVEAAPAAEPVPAST. The span at 265-277 shows a compositional bias: low complexity; sequence EAAPAAEPVPAST.

Belongs to the peptidase S14 family. In terms of assembly, fourteen CLPP subunits assemble into 2 heptameric rings which stack back to back to give a disk-like structure with a central cavity. Component of the ClpXP complex formed by the assembly of two CLPP heptameric rings with two CLPX hexameric rings, giving rise to a symmetrical structure with two central CLPP rings flanked by a CLPX ring at either end of the complex. In terms of tissue distribution, detected in liver (at protein level). Predominantly expressed in skeletal muscle. Intermediate levels in heart, liver and pancreas. Low in brain, placenta, lung and kidney.

It is found in the mitochondrion matrix. The catalysed reaction is Hydrolysis of proteins to small peptides in the presence of ATP and magnesium. alpha-casein is the usual test substrate. In the absence of ATP, only oligopeptides shorter than five residues are hydrolyzed (such as succinyl-Leu-Tyr-|-NHMec, and Leu-Tyr-Leu-|-Tyr-Trp, in which cleavage of the -Tyr-|-Leu- and -Tyr-|-Trp bonds also occurs).. In terms of biological role, protease component of the ClpXP complex that cleaves peptides and various proteins in an ATP-dependent process. Has low peptidase activity in the absence of CLPX. The ClpXP complex can degrade CSN1S1, CSN2 and CSN3, as well as synthetic peptides (in vitro) and may be responsible for a fairly general and central housekeeping function rather than for the degradation of specific substrates. Cleaves PINK1 in the mitochondrion. This is ATP-dependent Clp protease proteolytic subunit, mitochondrial from Homo sapiens (Human).